A 430-amino-acid polypeptide reads, in one-letter code: Enolase (430 aa).

Q163 lines the (2R)-2-phosphoglycerate pocket. E205 serves as the catalytic Proton donor. D242, E287, and D314 together coordinate Mg(2+). (2R)-2-phosphoglycerate contacts are provided by K339, R368, S369, and K390. K339 acts as the Proton acceptor in catalysis.

Belongs to the enolase family. Mg(2+) is required as a cofactor.

It is found in the cytoplasm. The protein resides in the secreted. The protein localises to the cell surface. It carries out the reaction (2R)-2-phosphoglycerate = phosphoenolpyruvate + H2O. It functions in the pathway carbohydrate degradation; glycolysis; pyruvate from D-glyceraldehyde 3-phosphate: step 4/5. Catalyzes the reversible conversion of 2-phosphoglycerate (2-PG) into phosphoenolpyruvate (PEP). It is essential for the degradation of carbohydrates via glycolysis. In Geobacillus kaustophilus (strain HTA426), this protein is Enolase.